The chain runs to 102 residues: Biotrophy-associated secreted protein 4 (102 aa).

The first 21 residues, 1-21, serve as a signal peptide directing secretion; sequence MQLSFSAIAILLAFAVNHATA. A glycan (N-linked (GlcNAc...) asparagine) is linked at N36.

It localises to the secreted. In terms of biological role, secreted effector involved in biotrophic colonization of plant cells. Participates in transition from the biotrophic to the necrotrophic phase of Magnaporthe oryzae. Elicits rice basic defense responses during the early stage of interaction and promotes cell death in the late stage of compatible interaction. In Pyricularia oryzae (strain 70-15 / ATCC MYA-4617 / FGSC 8958) (Rice blast fungus), this protein is Biotrophy-associated secreted protein 4.